The chain runs to 566 residues: Poly(A) polymerase pla1 (566 aa).

ATP is bound by residues 86–88 (YGS), 99–101 (DID), aspartate 153, lysine 214, tyrosine 223, and 232–233 (GV). Mg(2+) is bound by residues aspartate 99, aspartate 101, and aspartate 153. 2 disordered regions span residues 437–463 (HEKL…SENG) and 530–566 (DEVF…VSTA).

This sequence belongs to the poly(A) polymerase family. The cofactor is Mg(2+). Requires Mn(2+) as cofactor.

It is found in the nucleus. It carries out the reaction RNA(n) + ATP = RNA(n)-3'-adenine ribonucleotide + diphosphate. Polymerase that creates the 3'-poly(A) tail of mRNA's. May acquire specificity through interaction with a cleavage and polyadenylation factor (CF I). This chain is Poly(A) polymerase pla1 (pla1), found in Schizosaccharomyces pombe (strain 972 / ATCC 24843) (Fission yeast).